The chain runs to 189 residues: NADH-quinone oxidoreductase subunit B (189 aa).

Positions 39, 40, 104, and 135 each coordinate [4Fe-4S] cluster.

Belongs to the complex I 20 kDa subunit family. NDH-1 is composed of 14 different subunits. Subunits NuoB, C, D, E, F, and G constitute the peripheral sector of the complex. It depends on [4Fe-4S] cluster as a cofactor.

It is found in the cell inner membrane. It carries out the reaction a quinone + NADH + 5 H(+)(in) = a quinol + NAD(+) + 4 H(+)(out). NDH-1 shuttles electrons from NADH, via FMN and iron-sulfur (Fe-S) centers, to quinones in the respiratory chain. The immediate electron acceptor for the enzyme in this species is believed to be a menaquinone. Couples the redox reaction to proton translocation (for every two electrons transferred, four hydrogen ions are translocated across the cytoplasmic membrane), and thus conserves the redox energy in a proton gradient. The protein is NADH-quinone oxidoreductase subunit B of Chlorobium phaeovibrioides (strain DSM 265 / 1930) (Prosthecochloris vibrioformis (strain DSM 265)).